Consider the following 425-residue polypeptide: Enolase (425 aa).

Gln162 provides a ligand contact to (2R)-2-phosphoglycerate. Catalysis depends on Glu204, which acts as the Proton donor. Mg(2+) contacts are provided by Asp241, Glu282, and Asp309. (2R)-2-phosphoglycerate is bound by residues Lys334, Arg363, Ser364, and Lys385. Lys334 acts as the Proton acceptor in catalysis.

It belongs to the enolase family. It depends on Mg(2+) as a cofactor.

It is found in the cytoplasm. Its subcellular location is the secreted. The protein resides in the cell surface. The enzyme catalyses (2R)-2-phosphoglycerate = phosphoenolpyruvate + H2O. Its pathway is carbohydrate degradation; glycolysis; pyruvate from D-glyceraldehyde 3-phosphate: step 4/5. Catalyzes the reversible conversion of 2-phosphoglycerate (2-PG) into phosphoenolpyruvate (PEP). It is essential for the degradation of carbohydrates via glycolysis. In Corynebacterium diphtheriae (strain ATCC 700971 / NCTC 13129 / Biotype gravis), this protein is Enolase.